The chain runs to 179 residues: Zinc finger HIT domain-containing protein 3 (179 aa).

Zn(2+) is bound by residues Cys11, Cys14, Cys22, Cys25, Cys30, Cys34, His38, and Cys49. Residues 11–49 form an HIT-type zinc finger; sequence CVVCLEKPKYRCPACRVPYCSLPCFRKHKAPPLQQLPVC. Ser104 bears the Phosphoserine mark.

In terms of assembly, thyroid receptor interacting proteins (TRIPs) specifically interact with the ligand binding domain of the thyroid receptor (TR). Requires the presence of thyroid hormone for its interaction. Interacts with NUFIP1. Interacts (via HIT-type zinc finger) with the RUVBL1/RUVBL2 complex in the presence of ADP.

Its subcellular location is the cytoplasm. The protein resides in the nucleus. This Bos taurus (Bovine) protein is Zinc finger HIT domain-containing protein 3 (ZNHIT3).